The chain runs to 565 residues: Amino-acid acetyltransferase, mitochondrial (565 aa).

Positions 38 to 58 are disordered; it reads DIATATPAATPSDGAQPPAQN. The region spanning 352–540 is the N-acetyltransferase domain; that stretch reads LPVRVLRSME…EFGGGRLVRV (189 aa).

Belongs to the acetyltransferase family.

The protein resides in the mitochondrion. The catalysed reaction is L-glutamate + acetyl-CoA = N-acetyl-L-glutamate + CoA + H(+). Its pathway is amino-acid biosynthesis; L-arginine biosynthesis; N(2)-acetyl-L-ornithine from L-glutamate: step 1/4. In terms of biological role, N-acetylglutamate synthase involved in arginine biosynthesis. This chain is Amino-acid acetyltransferase, mitochondrial (ARG2), found in Cryptococcus neoformans var. neoformans serotype D (strain B-3501A) (Filobasidiella neoformans).